The chain runs to 564 residues: E3 ubiquitin-protein ligase RNF168 (564 aa).

The RING-type zinc-finger motif lies at C16 to R55. S70 is modified (phosphoserine). Positions L110 to E128 match the LR motif 1 motif. S134 carries the post-translational modification Phosphoserine. The UMI motif signature appears at E143–A151. 2 disordered regions span residues L149–A179 and N193–E291. Over residues E157–A179 the composition is skewed to basic and acidic residues. An MIU motif 1 motif is present at residues M168 to E191. A Phosphoserine modification is found at S197. K210 participates in a covalent cross-link: Glycyl lysine isopeptide (Lys-Gly) (interchain with G-Cter in SUMO2). Residues K242 to D259 are compositionally biased toward basic and acidic residues. Residues P275–Q288 show a composition bias toward polar residues. T348 and T361 each carry phosphothreonine. Phosphoserine is present on residues S413 and S414. The MIU motif 2 signature appears at R438–M461. Residues E455 to R564 are disordered. Positions R465–R476 match the LR motif 2 motif. Residues Q466–P480 show a composition bias toward polar residues. S469 carries the phosphoserine modification. Over residues N491 to Y515 the composition is skewed to basic and acidic residues. 2 stretches are compositionally biased toward polar residues: residues F519–K531 and Q555–R564. K524 participates in a covalent cross-link: Glycyl lysine isopeptide (Lys-Gly) (interchain with G-Cter in SUMO2).

The protein belongs to the RNF168 family. Monomer. Interacts with UBE2N/UBC13. In terms of processing, sumoylated with SUMO1 by PIAS4 in response to double-strand breaks (DSBs). Ubiquitinated.

The protein localises to the nucleus. The enzyme catalyses S-ubiquitinyl-[E2 ubiquitin-conjugating enzyme]-L-cysteine + [acceptor protein]-L-lysine = [E2 ubiquitin-conjugating enzyme]-L-cysteine + N(6)-ubiquitinyl-[acceptor protein]-L-lysine.. It functions in the pathway protein modification; protein ubiquitination. In terms of biological role, E3 ubiquitin-protein ligase required for accumulation of repair proteins to sites of DNA damage. Acts with UBE2N/UBC13 to amplify the RNF8-dependent histone ubiquitination. Recruited to sites of DNA damage at double-strand breaks (DSBs) by binding to ubiquitinated histone H2A and H2AX and amplifies the RNF8-dependent H2A ubiquitination, promoting the formation of 'Lys-63'-linked ubiquitin conjugates. This leads to concentrate ubiquitinated histones H2A and H2AX at DNA lesions to the threshold required for recruitment of TP53BP1 and BRCA1. Also recruited at DNA interstrand cross-links (ICLs) sites and promotes accumulation of 'Lys-63'-linked ubiquitination of histones H2A and H2AX, leading to recruitment of FAAP20 and Fanconi anemia (FA) complex, followed by interstrand cross-link repair. H2A ubiquitination also mediates the ATM-dependent transcriptional silencing at regions flanking DSBs in cis, a mechanism to avoid collision between transcription and repair intermediates. Also involved in class switch recombination in immune system, via its role in regulation of DSBs repair. Following DNA damage, promotes the ubiquitination and degradation of JMJD2A/KDM4A in collaboration with RNF8, leading to unmask H4K20me2 mark and promote the recruitment of TP53BP1 at DNA damage sites. Not able to initiate 'Lys-63'-linked ubiquitination in vitro; possibly due to partial occlusion of the UBE2N/UBC13-binding region. Catalyzes monoubiquitination of 'Lys-13' and 'Lys-15' of nucleosomal histone H2A (H2AK13Ub and H2AK15Ub, respectively). The protein is E3 ubiquitin-protein ligase RNF168 of Rattus norvegicus (Rat).